Consider the following 156-residue polypeptide: Arginine repressor (156 aa).

It belongs to the ArgR family.

The protein localises to the cytoplasm. Its pathway is amino-acid biosynthesis; L-arginine biosynthesis [regulation]. Its function is as follows. Regulates arginine biosynthesis genes. In Shewanella halifaxensis (strain HAW-EB4), this protein is Arginine repressor.